Consider the following 565-residue polypeptide: Probable beta-glucosidase btgE (565 aa).

A signal peptide spans 1–18 (MRGAILATAAALAGTAMA). Residues 246–304 (TGQDEPTSAPAAPSTTAVPATTTAAPETTTAAPDTTTAVPSTSSAAPSSSSTAPASTGA) are disordered. Positions 251–304 (PTSAPAAPSTTAVPATTTAAPETTTAAPDTTTAVPSTSSAAPSSSSTAPASTGA) are enriched in low complexity. Catalysis depends on Glu-405, which acts as the Proton donor. Catalysis depends on Glu-501, which acts as the Nucleophile.

This sequence belongs to the glycosyl hydrolase 17 family.

The protein resides in the secreted. It is found in the cell wall. It carries out the reaction Hydrolysis of terminal, non-reducing beta-D-glucosyl residues with release of beta-D-glucose.. The protein operates within glycan metabolism; cellulose degradation. In terms of biological role, beta-glucosidases are one of a number of cellulolytic enzymes involved in the degradation of cellulosic biomass. Catalyzes the last step releasing glucose from the inhibitory cellobiose. This is Probable beta-glucosidase btgE (btgE) from Aspergillus fumigatus (strain CBS 144.89 / FGSC A1163 / CEA10) (Neosartorya fumigata).